A 455-amino-acid polypeptide reads, in one-letter code: Bifunctional protein GlmU (455 aa).

The segment at 1-226 is pyrophosphorylase; the sequence is MALNVVILAA…AIEVEGANNR (226 aa). UDP-N-acetyl-alpha-D-glucosamine contacts are provided by residues 8–11, lysine 22, glutamine 73, 78–79, 100–102, glycine 137, glutamate 151, asparagine 166, and asparagine 224; these read LAAG, GT, and YGD. Residue aspartate 102 coordinates Mg(2+). Asparagine 224 serves as a coordination point for Mg(2+). The interval 227–247 is linker; it reads VQLAQLERAYQARAAEKLMLE. The segment at 248–455 is N-acetyltransferase; that stretch reads GANLRDPARL…WARPVKKPKS (208 aa). UDP-N-acetyl-alpha-D-glucosamine is bound by residues arginine 330 and lysine 348. Histidine 360 functions as the Proton acceptor in the catalytic mechanism. Tyrosine 363 and asparagine 374 together coordinate UDP-N-acetyl-alpha-D-glucosamine. Acetyl-CoA contacts are provided by residues alanine 377, 383-384, serine 402, alanine 420, and arginine 437; that span reads NY.

The protein in the N-terminal section; belongs to the N-acetylglucosamine-1-phosphate uridyltransferase family. In the C-terminal section; belongs to the transferase hexapeptide repeat family. Homotrimer. Mg(2+) is required as a cofactor.

The protein localises to the cytoplasm. The enzyme catalyses alpha-D-glucosamine 1-phosphate + acetyl-CoA = N-acetyl-alpha-D-glucosamine 1-phosphate + CoA + H(+). It catalyses the reaction N-acetyl-alpha-D-glucosamine 1-phosphate + UTP + H(+) = UDP-N-acetyl-alpha-D-glucosamine + diphosphate. It functions in the pathway nucleotide-sugar biosynthesis; UDP-N-acetyl-alpha-D-glucosamine biosynthesis; N-acetyl-alpha-D-glucosamine 1-phosphate from alpha-D-glucosamine 6-phosphate (route II): step 2/2. Its pathway is nucleotide-sugar biosynthesis; UDP-N-acetyl-alpha-D-glucosamine biosynthesis; UDP-N-acetyl-alpha-D-glucosamine from N-acetyl-alpha-D-glucosamine 1-phosphate: step 1/1. The protein operates within bacterial outer membrane biogenesis; LPS lipid A biosynthesis. Functionally, catalyzes the last two sequential reactions in the de novo biosynthetic pathway for UDP-N-acetylglucosamine (UDP-GlcNAc). The C-terminal domain catalyzes the transfer of acetyl group from acetyl coenzyme A to glucosamine-1-phosphate (GlcN-1-P) to produce N-acetylglucosamine-1-phosphate (GlcNAc-1-P), which is converted into UDP-GlcNAc by the transfer of uridine 5-monophosphate (from uridine 5-triphosphate), a reaction catalyzed by the N-terminal domain. The chain is Bifunctional protein GlmU from Shewanella sediminis (strain HAW-EB3).